The sequence spans 201 residues: Lymphocyte antigen 6 complex locus protein G5b (201 aa).

Positions 1 to 18 (MKVHMLVGVLVMVGFTVG) are cleaved as a signal peptide. The 93-residue stretch at 26 to 118 (RTCHFCLVED…SPQLQSSLPE (93 aa)) folds into the UPAR/Ly6 domain. 5 disulfides stabilise this stretch: cysteine 28–cysteine 55, cysteine 31–cysteine 40, cysteine 47–cysteine 73, cysteine 81–cysteine 98, and cysteine 99–cysteine 104. N-linked (GlcNAc...) asparagine glycans are attached at residues asparagine 141 and asparagine 183.

In terms of assembly, forms oligomer. Post-translationally, N-glycosylated.

It is found in the secreted. The protein is Lymphocyte antigen 6 complex locus protein G5b (LY6G5B) of Homo sapiens (Human).